The following is a 353-amino-acid chain: Ferredoxin--NADP reductase 1 (353 aa).

Residues Thr-14, Asp-33, Gln-41, Tyr-46, Ala-86, Phe-121, Asp-289, and Thr-330 each coordinate FAD.

This sequence belongs to the ferredoxin--NADP reductase type 2 family. As to quaternary structure, homodimer. FAD is required as a cofactor.

It catalyses the reaction 2 reduced [2Fe-2S]-[ferredoxin] + NADP(+) + H(+) = 2 oxidized [2Fe-2S]-[ferredoxin] + NADPH. In Christiangramia forsetii (strain DSM 17595 / CGMCC 1.15422 / KT0803) (Gramella forsetii), this protein is Ferredoxin--NADP reductase 1.